We begin with the raw amino-acid sequence, 131 residues long: MAAAHRCLFLLLLSTCVALLLQPPLGALGAPLEPEYPGDNATPEQMAQYAAELRRYINMLTRPRYGKRDKEGTLDFLECGSPHSAVPRYGKRDKEGTLDFLECGSPHSAVPRWVFSLSCVPRCLGQENGGV.

A signal peptide spans 1–29 (MAAAHRCLFLLLLSTCVALLLQPPLGALG). The residue at position 65 (Tyr65) is a Tyrosine amide.

The protein belongs to the NPY family.

It localises to the secreted. Functionally, hormone secreted by pancreatic cells that acts as a regulator of pancreatic and gastrointestinal functions probably by signaling through the G protein-coupled receptor NPY4R2. The protein is Pancreatic polypeptide prohormone (PPY) of Bos taurus (Bovine).